Consider the following 147-residue polypeptide: Ubiquitin-conjugating enzyme E2 D3 (147 aa).

In terms of domain architecture, UBC core spans 1 to 147 (MALKRINKEL…SREWTQKYAM (147 aa)). Cysteine 21 and cysteine 107 are oxidised to a cystine. The active-site Glycyl thioester intermediate is the cysteine 85.

Belongs to the ubiquitin-conjugating enzyme family. In terms of assembly, interacts with SCF (SKP1-CUL1-F-box protein) E3 ubiquitin ligase complex; when Cullin is neddylated, the interaction between the E2 and the SCF complex is strengthened. Interacts with DAPK3. Interacts with BRCA1; the DNA damage checkpoint promotes the association with BRCA1 after ionizing radiation. Interacts non-covalently with ubiquitin. Interacts with E3 ubiquitin-protein ligase CBLC. Interacts with UBTD1. Interacts with RIGI and RNF135; involved in RIGI ubiquitination and activation. Post-translationally, phosphorylated by AURKB.

It is found in the cell membrane. The protein localises to the endosome membrane. It carries out the reaction S-ubiquitinyl-[E1 ubiquitin-activating enzyme]-L-cysteine + [E2 ubiquitin-conjugating enzyme]-L-cysteine = [E1 ubiquitin-activating enzyme]-L-cysteine + S-ubiquitinyl-[E2 ubiquitin-conjugating enzyme]-L-cysteine.. The catalysed reaction is S-ubiquitinyl-[E1 ubiquitin-activating enzyme]-L-cysteine + [acceptor protein]-L-lysine = [E1 ubiquitin-activating enzyme]-L-cysteine + N(6)-monoubiquitinyl-[acceptor protein]-L-lysine.. It participates in protein modification; protein ubiquitination. In terms of biological role, accepts ubiquitin from the E1 complex and catalyzes its covalent attachment to other proteins. In vitro catalyzes 'Lys-11'-, as well as 'Lys-48'-linked polyubiquitination. Cooperates with the E2 CDC34 and the SCF(FBXW11) E3 ligase complex for the polyubiquitination of NFKBIA leading to its subsequent proteasomal degradation. Acts as an initiator E2, priming the phosphorylated NFKBIA target at positions 'Lys-21' and/or 'Lys-22' with a monoubiquitin. Ubiquitin chain elongation is then performed by CDC34, building ubiquitin chains from the UBE2D3-primed NFKBIA-linked ubiquitin. Also acts as an initiator E2, in conjunction with RNF8, for the priming of PCNA. Monoubiquitination of PCNA, and its subsequent polyubiquitination, are essential events in the operation of the DNA damage tolerance (DDT) pathway that is activated after DNA damage caused by UV or chemical agents during S-phase. Associates with the BRCA1/BARD1 E3 ligase complex to perform ubiquitination at DNA damage sites following ionizing radiation leading to DNA repair. Targets DAPK3 for ubiquitination which influences promyelocytic leukemia protein nuclear body (PML-NB) formation in the nucleus. In conjunction with the MDM2 and TOPORS E3 ligases, functions ubiquitination of p53/TP53. In conjunction with the CBL E3 ligase, targets EGFR for polyubiquitination at the plasma membrane as well as during its internalization and transport on endosomes. In conjunction with the STUB1 E3 quality control E3 ligase, ubiquitinates unfolded proteins to catalyze their immediate destruction. Together with RNF135, catalyzes the viral RNA-dependent 'Lys-63'-linked polyubiquitination of RIGI to activate the downstream signaling pathway that leads to interferon beta production. Together with ZNF598, catalyzes ubiquitination of 40S ribosomal proteins in response to ribosome collisions. In cooperation with the GATOR2 complex, catalyzes 'Lys-6'-linked ubiquitination of NPRL2. The polypeptide is Ubiquitin-conjugating enzyme E2 D3 (UBE2D3) (Homo sapiens (Human)).